Here is a 490-residue protein sequence, read N- to C-terminus: Gram-negative bacteria-binding protein 3 (490 aa).

Residues 1–25 form the signal peptide; that stretch reads MADALRFVAWSCCLQLLFLLLGVQG. The CBM39 domain maps to 26 to 126; it reads YEVPKAKIDV…GSFVVNGYSG (101 aa). One can recognise a GH16 domain in the interval 162–490; sequence TEVNGAPTRC…KIDYVKVYSL (329 aa). 2 N-linked (GlcNAc...) asparagine glycosylation sites follow: asparagine 362 and asparagine 373.

It belongs to the insect beta-1,3-glucan binding protein family.

The protein resides in the secreted. In terms of biological role, involved in the recognition of invading microorganisms. Binds specifically to beta-1,3-glucan and activates the phenoloxidase cascade. This Drosophila melanogaster (Fruit fly) protein is Gram-negative bacteria-binding protein 3.